Reading from the N-terminus, the 196-residue chain is Rho-related protein racL (196 aa).

10–17 (GDGAVGKT) serves as a coordination point for GTP. The short motif at 32–40 (YQPTVFDNF) is the Effector region element. Residues 57–61 (DTAGQ) and 116–119 (TQND) each bind GTP. Residue Cys-193 is modified to Cysteine methyl ester. Cys-193 carries S-geranylgeranyl cysteine lipidation. The propeptide at 194–196 (IIL) is removed in mature form.

This sequence belongs to the small GTPase superfamily. Rho family.

It localises to the cell membrane. This is Rho-related protein racL (racL) from Dictyostelium discoideum (Social amoeba).